An 888-amino-acid polypeptide reads, in one-letter code: Potassium channel AKT6 (888 aa).

The Cytoplasmic portion of the chain corresponds to 1–84; it reads MEKKKVWFWG…PFDPRYRAWE (84 aa). The interval 10 to 31 is disordered; it reads GVKDDGEGGGGRGGGRTKDAED. The helical transmembrane segment at 85–105 threads the bilayer; the sequence is TFLVFLVLYTAWASPFEFGFL. The Extracellular portion of the chain corresponds to 106–113; it reads QKPRPPLS. A helical transmembrane segment spans residues 114 to 134; that stretch reads ILDNIVNGFFAVDIVLTFFVA. Topologically, residues 135-155 are cytoplasmic; that stretch reads FLDKVTYLLVDDPKRIAWRYA. Residues 156-176 traverse the membrane as a helical segment; it reads STWLIFDVVSTFPYEIFGSLL. Residues 177–184 are Extracellular-facing; it reads HESIQGYG. The chain crosses the membrane as a helical; Voltage-sensor span at residues 185 to 205; sequence IFSMLRLWRLRRVSNCFARLE. The Cytoplasmic segment spans residues 206–219; that stretch reads KDRKYSYFWVRCSK. The helical transmembrane segment at 220 to 240 threads the bilayer; it reads LLLVTLFVIHCGACFLYSIAA. At 241–267 the chain is on the extracellular side; it reads HYPDPSKTFMALTDENWKESPIAVRYN. The pore-forming intramembrane region spans 268-287; it reads TAMYWSITTFSTTGYGDIHG. Residues 288–291 are Extracellular-facing; sequence VNSR. The chain crosses the membrane as a helical span at residues 292 to 312; sequence EMTFILFYMVFNLGLSAYIIG. At 313–888 the chain is on the cytoplasmic side; sequence NMTNLVVHVT…GDFLLLSRDP (576 aa). 398–519 lines the a nucleoside 3',5'-cyclic phosphate pocket; sequence LFHGISNDLL…IMNNLLQHLK (122 aa). ANK repeat units follow at residues 543 to 572, 576 to 605, 609 to 638, 640 to 669, and 673 to 702; these read DLPL…SPNE, DGRT…DPNI, EGNV…KLSL, SVSY…DVTL, and NGTT…DLDW. One can recognise a KHA domain in the interval 822-888; the sequence is RVTISSPENG…GDFLLLSRDP (67 aa).

It belongs to the potassium channel family. Plant (TC 1.A.1.4) subfamily. As to quaternary structure, the potassium channel is probably composed of a homo- or heterotetrameric complex of pore-forming subunits. Predominantly expressed in flowers; especially in pollen.

Its subcellular location is the membrane. Highly selective inward-rectifying potassium channel that could mediate potassium uptake in the pollen membrane. Plays an important role in pollen tube development. Assuming opened or closed conformations in response to the voltage difference across the membrane, the channel is activated by hyperpolarization. May interact with the cytoskeleton or with regulatory proteins. In Arabidopsis thaliana (Mouse-ear cress), this protein is Potassium channel AKT6 (AKT6).